Here is a 388-residue protein sequence, read N- to C-terminus: Putative [LysW]-aminoadipate semialdehyde/glutamate semialdehyde transaminase (388 aa).

Residues 100–101 (GT) and Phe127 each bind pyridoxal 5'-phosphate. Arg130 is a substrate binding site. Pyridoxal 5'-phosphate is bound at residue 211–214 (DEIQ). Lys240 carries the post-translational modification N6-(pyridoxal phosphate)lysine. Position 268 (Ser268) interacts with substrate. Thr269 is a binding site for pyridoxal 5'-phosphate.

Belongs to the class-III pyridoxal-phosphate-dependent aminotransferase family. LysJ subfamily. Homodimer. Pyridoxal 5'-phosphate is required as a cofactor.

Its subcellular location is the cytoplasm. The catalysed reaction is [amino-group carrier protein]-C-terminal-gamma-(L-lysyl)-L-glutamate + 2-oxoglutarate = [amino-group carrier protein]-C-terminal-N-(1-carboxy-5-oxopentan-1-yl)-L-glutamine + L-glutamate. It catalyses the reaction [amino-group carrier protein]-C-terminal-gamma-(L-ornithyl)-L-glutamate + 2-oxoglutarate = [amino-group carrier protein]-C-terminal-gamma-(L-glutamyl-5-semialdehyde)-L-glutamate + L-glutamate. The protein operates within amino-acid biosynthesis; L-lysine biosynthesis via AAA pathway; L-lysine from L-alpha-aminoadipate (Thermus route): step 4/5. It functions in the pathway amino-acid biosynthesis; L-arginine biosynthesis. In terms of biological role, involved in both the arginine and lysine biosynthetic pathways. This is Putative [LysW]-aminoadipate semialdehyde/glutamate semialdehyde transaminase from Aeropyrum pernix (strain ATCC 700893 / DSM 11879 / JCM 9820 / NBRC 100138 / K1).